Reading from the N-terminus, the 606-residue chain is NADH-ubiquinone oxidoreductase chain 5 (606 aa).

Transmembrane regions (helical) follow at residues 3-23 (VINLIPTLTLTSLIILTLPIT), 38-58 (ITKMAVTCAFAISLIPTLLFL), 87-107 (FFSLTFMPIALFITWSIMEFS), 124-144 (LLLFLITMLILVSANNLLQLF), 180-200 (IGDMGFIMMMAWFIIHLNSWE), 216-236 (LLGLLLASAGKSAQFGLHPWL), 244-264 (TPVSALLHSSTMVMAGVFTLI), 276-296 (IQTSTLCLGAITTLFTAICAL), 304-323 (IIALSTSSQLGLMMVTIGIN), 328-350 (AFTHMCTHAFFKAMLFLSSGSII), 369-389 (MPITSTAIIIGSLALTGMPFL), 404-424 (MSYINTWALLITLIAVSMTAS), 460-480 (LILGSIFMGFFISMNTIPHTT), 483-503 (MTMPPHLKFMALAVTLLGFTV), and 586-606 (LMKLYFLSFLLSITLGLLITL).

It belongs to the complex I subunit 5 family. In terms of assembly, core subunit of respiratory chain NADH dehydrogenase (Complex I) which is composed of 45 different subunits.

The protein localises to the mitochondrion inner membrane. It catalyses the reaction a ubiquinone + NADH + 5 H(+)(in) = a ubiquinol + NAD(+) + 4 H(+)(out). Its function is as follows. Core subunit of the mitochondrial membrane respiratory chain NADH dehydrogenase (Complex I) which catalyzes electron transfer from NADH through the respiratory chain, using ubiquinone as an electron acceptor. Essential for the catalytic activity and assembly of complex I. This is NADH-ubiquinone oxidoreductase chain 5 (MT-ND5) from Elephas maximus (Indian elephant).